Here is a 552-residue protein sequence, read N- to C-terminus: Hyaluronan synthase 2 (552 aa).

The Cytoplasmic portion of the chain corresponds to 1–11 (MHCERFLCVLR). A helical transmembrane segment spans residues 12–32 (IIGTTLFGVSLLLGITAAYIV). Over 33–45 (GYQFIQTDNYYFS) the chain is Extracellular. A helical membrane pass occupies residues 46 to 66 (FGLYGAFLASHLIIQSLFAFL). Over 67-374 (EHRKMKKSLE…NAMWFHKHHL (308 aa)) the chain is Cytoplasmic. Thr110 carries the phosphothreonine modification. Residue Lys190 forms a Glycyl lysine isopeptide (Lys-Gly) (interchain with G-Cter in ubiquitin) linkage. O-linked (GlcNAc) serine glycosylation occurs at Ser221. Thr328 is modified (phosphothreonine). The chain crosses the membrane as a helical span at residues 375–395 (WMTYEAVITGFFPFFLIATVI). The Extracellular segment spans residues 396–402 (QLFYRGK). Residues 403 to 423 (IWNILLFLLTVQLVGLIKSSF) form a helical membrane-spanning segment. The Cytoplasmic portion of the chain corresponds to 424–429 (ASCLRG). A helical membrane pass occupies residues 430 to 450 (NIVMVFMSLYSVLYMSSLLPA). The Extracellular segment spans residues 451 to 475 (KMFAIATINKAGWGTSGRKTIVVNF). The helical transmembrane segment at 476-496 (IGLIPVSVWFTILLGGVIFTI) threads the bilayer. The Cytoplasmic portion of the chain corresponds to 497-510 (YKESKKPFSESKQT). Residues 511–531 (VLIVGTLIYACYWVMLLTLYV) traverse the membrane as a helical segment. Over 532-552 (VLINKCGRRKKGQQYDMVLDV) the chain is Extracellular.

This sequence belongs to the NodC/HAS family. Homodimer; dimerization promotes enzymatic activity. Forms heterodimer with HAS3. Forms heterodimer with HAS1. The cofactor is Mg(2+). Phosphorylation at Thr-328 is essential for hyaluronan synthase activity. Post-translationally, O-GlcNAcylation at Ser-221 increases the stability of HAS2 and plasma membrane localization. In terms of processing, ubiquitination at Lys-190; this ubiquitination is essential for hyaluronan synthase activity and homo- or hetero-oligomerization. Can also be poly-ubiquitinated. Deubiquitinated by USP17L22/USP17 and USP4. USP17L22/USP17 efficiently removes 'Lys-63'- and 'Lys-48'-linked polyubiquitin chains, whereas USP4 preferentially removes monoubiquitination and, partially, both 'Lys-63'- and 'Lys-48'-linked polyubiquitin chain. Expressed in heart, brain, spleen, lung and skeletal muscle.

The protein localises to the cell membrane. It localises to the endoplasmic reticulum membrane. It is found in the vesicle. Its subcellular location is the golgi apparatus membrane. The protein resides in the lysosome. The enzyme catalyses [hyaluronan](n) + UDP-N-acetyl-alpha-D-glucosamine = N-acetyl-beta-D-glucosaminyl-(1-&gt;4)-[hyaluronan](n) + UDP + H(+). It catalyses the reaction N-acetyl-beta-D-glucosaminyl-(1-&gt;4)-[hyaluronan](n) + UDP-alpha-D-glucuronate = [hyaluronan](n+1) + UDP + H(+). Its pathway is glycan biosynthesis; hyaluronan biosynthesis. Functionally, catalyzes the addition of GlcNAc or GlcUA monosaccharides to the nascent hyaluronan polymer. Therefore, it is essential to hyaluronan synthesis a major component of most extracellular matrices that has a structural role in tissues architectures and regulates cell adhesion, migration and differentiation. This is one of the isozymes catalyzing that reaction and it is particularly responsible for the synthesis of high molecular mass hyaluronan. Required for the transition of endocardial cushion cells into mesenchymal cells, a process crucial for heart development. May also play a role in vasculogenesis. High molecular mass hyaluronan also play a role in early contact inhibition a process which stops cell growth when cells come into contact with each other or the extracellular matrix. In terms of biological role, catalyzes the addition of GlcNAc or GlcUA monosaccharides to the nascent hyaluronan polymer. Therefore, it is essential to hyaluronan synthesis a major component of most extracellular matrices that has a structural role in tissues architectures and regulates cell adhesion, migration and differentiation. This is one of three isoenzymes responsible for cellular hyaluronan synthesis and it is particularly responsible for the synthesis of high molecular mass hyaluronan. The chain is Hyaluronan synthase 2 from Mus musculus (Mouse).